The primary structure comprises 263 residues: Receptor expression-enhancing protein 3-A (263 aa).

2 helical membrane passes run 2–22 (VSWI…PAYF) and 35–55 (YVRW…EAIA). Disordered regions lie at residues 161–228 (GDET…SMRS) and 240–263 (YASL…AHHL). The segment covering 199–214 (DDNTDEDVEVNSEDEV) has biased composition (acidic residues). Positions 242-251 (SLKHKPKKRP) are enriched in basic residues.

This sequence belongs to the DP1 family.

Its subcellular location is the endoplasmic reticulum membrane. Its function is as follows. Microtubule-binding protein required to ensure proper cell division and nuclear envelope reassembly by sequestering the endoplasmic reticulum away from chromosomes during mitosis. Probably acts by clearing the endoplasmic reticulum membrane from metaphase chromosomes. The polypeptide is Receptor expression-enhancing protein 3-A (reep3-a) (Xenopus laevis (African clawed frog)).